Here is a 129-residue protein sequence, read N- to C-terminus: Small ribosomal subunit protein uS11 (129 aa).

It belongs to the universal ribosomal protein uS11 family. Part of the 30S ribosomal subunit. Interacts with proteins S7 and S18. Binds to IF-3.

In terms of biological role, located on the platform of the 30S subunit, it bridges several disparate RNA helices of the 16S rRNA. Forms part of the Shine-Dalgarno cleft in the 70S ribosome. The protein is Small ribosomal subunit protein uS11 of Staphylococcus saprophyticus subsp. saprophyticus (strain ATCC 15305 / DSM 20229 / NCIMB 8711 / NCTC 7292 / S-41).